A 530-amino-acid polypeptide reads, in one-letter code: GH3 domain-containing protein (530 aa).

The first 17 residues, 1–17, serve as a signal peptide directing secretion; it reads MLLWPLLLLLLLLPTLA. The disordered stretch occupies residues 99–122; it reads LTKASQTQQEDSGEQPLPPTSNQD. Residue Asn-450 is glycosylated (N-linked (GlcNAc...) asparagine). Residue Gln-489 is modified to N5-methylglutamine.

This sequence belongs to the GH3 family. Methylated at Gln-489 by N6AMT1.

Its subcellular location is the endoplasmic reticulum. It is found in the nucleus envelope. This is GH3 domain-containing protein (GHDC) from Homo sapiens (Human).